The primary structure comprises 150 residues: Multiprotein-bridging factor 1 (150 aa).

Positions S36–A71 are disordered. Over residues P48 to S70 the composition is skewed to basic and acidic residues. An HTH cro/C1-type domain is found at I84 to A137. Residues Q94–S113 constitute a DNA-binding region (H-T-H motif).

This sequence belongs to the MBF1 family.

Transcriptional coactivator that stimulates GCN4-dependent transcriptional activity by bridging the DNA-binding region of GCN4 and TBP (SPT15), thereby recruiting TBP to GCN4-bound promoters. Involved in induction of the ribosome quality control (RQC) pathway; a pathway that degrades nascent peptide chains during problematic translation. Required to prevent stalled ribosomes from frameshifting. This is Multiprotein-bridging factor 1 (MBF1) from Cryptococcus neoformans var. neoformans serotype D (strain B-3501A) (Filobasidiella neoformans).